The chain runs to 499 residues: Serine/threonine-protein phosphatase 5 (499 aa).

The interval 1-24 is disordered; the sequence is MAMAEGERTECAETPRDEPPADGT. At A2 the chain carries N-acetylalanine. TPR repeat units lie at residues 28–61, 62–95, and 96–129; these read AEELKTQANDYFKAKDYENAIKFYSQAIELNPGN, AIYYGNRSLAYLRTECYGYALGDATRAIELDKKY, and IKGYYRRAASNMALGKFRAALRDYETVVKVKPND. Positions 184–499 are catalytic; sequence GKVTITFMKD…ANTLLQLGMM (316 aa). D242, H244, and D271 together coordinate Mn(2+). H244 is a substrate binding site. Substrate is bound by residues R275 and 303–304; that span reads NH. N303 is a binding site for Mn(2+). Catalysis depends on H304, which acts as the Proton donor/acceptor. Position 352 (H352) interacts with Mn(2+). Positions 400 and 427 each coordinate substrate. Residue H427 participates in Mn(2+) binding. Residues 495-499 form a required for autoinhibition region; sequence QLGMM.

Belongs to the PPP phosphatase family. PP-5 (PP-T) subfamily. Probably forms a complex composed of chaperones HSP90 and HSP70, co-chaperones STIP1/HOP, CDC37, PPP5C, PTGES3/p23, TSC1 and client protein TSC2. Probably forms a complex composed of chaperones HSP90 and HSP70, co-chaperones CDC37, PPP5C, TSC1 and client protein TSC2, CDK4, AKT, RAF1 and NR3C1; this complex does not contain co-chaperones STIP1/HOP and PTGES3/p23. Part of a complex with HSP90/HSP90AA1 and steroid receptors. Interacts (via TPR repeats) with HSP90AA1 (via TPR repeat-binding motif) or HSPA1A/HSPA1B; the interaction is direct and activates the phosphatase activity. Dissociates from HSPA1A/HSPA1B and HSP90AA1 in response to arachidonic acid. Interacts with CPNE1 (via VWFA domain). Interacts with CDC16, CDC27. Interacts with KLHDC10 (via the 6 Kelch repeats); inhibits the phosphatase activity on MAP3K5. Interacts with ATM and ATR; both interactions are induced by DNA damage and enhance ATM and ATR kinase activity. Interacts with RAD17; reduced by DNA damage. Interacts with nuclear receptors such as NR3C1/GCR and PPARG (activated by agonist); regulates their transactivation activities. Interacts (via TPR repeats) with S100 proteins S100A1, S100A2, S100A6, S100B and S100P; the interactions are calcium-dependent, strongly activate PPP5C phosphatase activity and compete with HSP90AA1 and MAP3K5 interactions. Interacts with SMAD2 and SMAD3 but not with SMAD1; decreases SMAD3 phosphorylation and protein levels. Interacts (via TPR repeats) with CRY1 and CRY2; the interaction with CRY2 down-regulates the phosphatase activity on CSNK1E. Interacts (via TPR repeats) with the active form of RAC1, GNA12 or GNA13; these interactions activate the phosphatase activity and translocate PPP5C to the cell membrane. Interacts with FLCN. Requires Mg(2+) as cofactor. It depends on Mn(2+) as a cofactor. In terms of processing, activated by at least two different proteolytic cleavages producing a 56 kDa and a 50 kDa form. Expressed in liver (at protein level) and brain, enriched in suprachiasmatic nuclei.

It is found in the nucleus. Its subcellular location is the cytoplasm. The protein resides in the cell membrane. It catalyses the reaction O-phospho-L-seryl-[protein] + H2O = L-seryl-[protein] + phosphate. The catalysed reaction is O-phospho-L-threonyl-[protein] + H2O = L-threonyl-[protein] + phosphate. Its activity is regulated as follows. Autoinhibited. In the autoinhibited state, the TPR domain interacts with the catalytic region and prevents substrate access to the catalytic pocket. Allosterically activated by various polyunsaturated fatty acids, free long-chain fatty-acids and long-chain fatty acyl-CoA esters, arachidonic acid being the most effective activator. HSP90A and probably RAC1, GNA12 and GNA13 can also release the autoinhibition by the TPR repeat. Activation by RAC1, GNA12 and GNA13 is synergistic with the one produced by fatty acids binding. Inhibited by okadaic acid. Its function is as follows. Serine/threonine-protein phosphatase that dephosphorylates a myriad of proteins involved in different signaling pathways including the kinases CSNK1E, ASK1/MAP3K5, PRKDC and RAF1, the nuclear receptors NR3C1, PPARG, ESR1 and ESR2, SMAD proteins and TAU/MAPT. Implicated in wide ranging cellular processes, including apoptosis, differentiation, DNA damage response, cell survival, regulation of ion channels or circadian rhythms, in response to steroid and thyroid hormones, calcium, fatty acids, TGF-beta as well as oxidative and genotoxic stresses. Participates in the control of DNA damage response mechanisms such as checkpoint activation and DNA damage repair through, for instance, the regulation ATM/ATR-signaling and dephosphorylation of PRKDC and TP53BP1. Inhibits ASK1/MAP3K5-mediated apoptosis induced by oxidative stress. Plays a positive role in adipogenesis, mainly through the dephosphorylation and activation of PPARG transactivation function. Also dephosphorylates and inhibits the anti-adipogenic effect of NR3C1. Regulates the circadian rhythms, through the dephosphorylation and activation of CSNK1E. May modulate TGF-beta signaling pathway by the regulation of SMAD3 phosphorylation and protein expression levels. Dephosphorylates and may play a role in the regulation of TAU/MAPT. Through their dephosphorylation, may play a role in the regulation of ions channels such as KCNH2. Dephosphorylate FNIP1, disrupting interaction with HSP90AA1/Hsp90. This Mus musculus (Mouse) protein is Serine/threonine-protein phosphatase 5 (Ppp5c).